The sequence spans 101 residues: NAD(P)H-quinone oxidoreductase subunit 4L, chloroplastic (101 aa).

The next 3 helical transmembrane spans lie at 2–22 (ILEH…YGLI), 32–52 (MCLE…SDFF), and 61–81 (IFCI…LAIV).

Belongs to the complex I subunit 4L family. In terms of assembly, NDH is composed of at least 16 different subunits, 5 of which are encoded in the nucleus.

Its subcellular location is the plastid. It localises to the chloroplast thylakoid membrane. The catalysed reaction is a plastoquinone + NADH + (n+1) H(+)(in) = a plastoquinol + NAD(+) + n H(+)(out). It catalyses the reaction a plastoquinone + NADPH + (n+1) H(+)(in) = a plastoquinol + NADP(+) + n H(+)(out). Functionally, NDH shuttles electrons from NAD(P)H:plastoquinone, via FMN and iron-sulfur (Fe-S) centers, to quinones in the photosynthetic chain and possibly in a chloroplast respiratory chain. The immediate electron acceptor for the enzyme in this species is believed to be plastoquinone. Couples the redox reaction to proton translocation, and thus conserves the redox energy in a proton gradient. This Lepidium virginicum (Virginia pepperweed) protein is NAD(P)H-quinone oxidoreductase subunit 4L, chloroplastic.